Here is a 23-residue protein sequence, read N- to C-terminus: Fimbrial protein (23 aa).

Cysteines 8 and 21 form a disulfide.

This sequence belongs to the N-Me-Phe pilin family. As to quaternary structure, the pili are polar flexible filaments of about 5.4 nanometers diameter and 2.5 micrometers average length; they consist of only a single polypeptide chain arranged in a helical configuration of five subunits per turn in the assembled pilus.

It localises to the fimbrium. The protein is Fimbrial protein (pil) of Pseudomonas aeruginosa.